The chain runs to 358 residues: Nicotinate-nucleotide--dimethylbenzimidazole phosphoribosyltransferase (358 aa).

Glutamate 313 acts as the Proton acceptor in catalysis.

It belongs to the CobT family.

It catalyses the reaction 5,6-dimethylbenzimidazole + nicotinate beta-D-ribonucleotide = alpha-ribazole 5'-phosphate + nicotinate + H(+). It participates in nucleoside biosynthesis; alpha-ribazole biosynthesis; alpha-ribazole from 5,6-dimethylbenzimidazole: step 1/2. In terms of biological role, catalyzes the synthesis of alpha-ribazole-5'-phosphate from nicotinate mononucleotide (NAMN) and 5,6-dimethylbenzimidazole (DMB). The chain is Nicotinate-nucleotide--dimethylbenzimidazole phosphoribosyltransferase from Corynebacterium glutamicum (strain ATCC 13032 / DSM 20300 / JCM 1318 / BCRC 11384 / CCUG 27702 / LMG 3730 / NBRC 12168 / NCIMB 10025 / NRRL B-2784 / 534).